A 491-amino-acid chain; its full sequence is Transcription factor AP-2-alpha (491 aa).

Positions glycine 74–leucine 161 are disordered. A PPxY motif motif is present at residues tyrosine 111–tyrosine 116. Composition is skewed to low complexity over residues isoleucine 119–serine 128 and glutamine 142–glutamine 155. Residues lysine 231 and lysine 238 each participate in a glycyl lysine isopeptide (Lys-Gly) (interchain with G-Cter in SUMO2) cross-link. Serine 293 carries the post-translational modification Phosphoserine; by PKA. The interval arginine 334–aspartate 464 is H-S-H (helix-span-helix), dimerization. Residues leucine 468–lysine 481 are compositionally biased toward polar residues. Residues leucine 468 to lysine 491 form a disordered region. A compositionally biased stretch (basic and acidic residues) spans serine 482–lysine 491.

This sequence belongs to the AP-2 family. Binds DNA as a dimer. Can form homodimers or heterodimers with other AP-2 family members. Interacts with WWOX. Interacts with CITED4. Interacts with UBE2I. Interacts with RALBP1 in a complex also containing EPN1 and NUMB during interphase and mitosis. Interacts with KCTD1; this interaction represses transcription activation. Interacts (via C-terminus) with CITED2 (via C-terminus); the interaction stimulates TFAP2A-transcriptional activation. Interacts (via N-terminus) with EP300 (via N-terminus); the interaction requires CITED2. Interacts with KCTD15; this interaction inhibits TFAP2A transcriptional activation.

It localises to the nucleus. Sequence-specific DNA-binding protein that interacts with inducible viral and cellular enhancer elements to regulate transcription of selected genes. AP-2 factors bind to the consensus sequence 5'-GCCNNNGGC-3' and activate genes involved in a large spectrum of important biological functions including proper eye, face, body wall, limb and neural tube development. They also suppress a number of genes including MCAM/MUC18, C/EBP alpha and MYC. AP-2-alpha is the only AP-2 protein required for early morphogenesis of the lens vesicle. Together with the CITED2 coactivator, stimulates the PITX2 P1 promoter transcription activation. Associates with chromatin to the PITX2 P1 promoter region. The chain is Transcription factor AP-2-alpha (TFAP2A) from Ovis aries (Sheep).